A 219-amino-acid polypeptide reads, in one-letter code: Large ribosomal subunit protein uL1 (219 aa).

This sequence belongs to the universal ribosomal protein uL1 family. As to quaternary structure, part of the 50S ribosomal subunit.

Functionally, binds directly to 23S rRNA. Probably involved in E site tRNA release. Protein L1 is also a translational repressor protein, it controls the translation of its operon by binding to its mRNA. The polypeptide is Large ribosomal subunit protein uL1 (Pyrococcus abyssi (strain GE5 / Orsay)).